A 727-amino-acid chain; its full sequence is Translation initiation factor IF-2, mitochondrial (727 aa).

A mitochondrion-targeting transit peptide spans 1-29; that stretch reads MNRKILKLENLLRFHTICRQLHSLCQRRM. Residues 178 to 348 enclose the tr-type G domain; it reads PRSPVVTIMG…IALAEMLELK (171 aa). The segment at 187–194 is G1; it reads GHVDHGKT. Residue 187–194 participates in GTP binding; it reads GHVDHGKT. Residues 212 to 216 are G2; it reads GITQH. GTP contacts are provided by residues 234 to 237 and 288 to 291; these read DTPG and NKCD. Residues 234–237 are G3; that stretch reads DTPG. Residues 288–291 are G4; that stretch reads NKCD. The segment at 324-326 is G5; the sequence is SAL. Residue Thr688 is modified to Phosphothreonine.

This sequence belongs to the TRAFAC class translation factor GTPase superfamily. Classic translation factor GTPase family. IF-2 subfamily. In terms of assembly, monomer.

It localises to the mitochondrion. In terms of biological role, one of the essential components for the initiation of protein synthesis. Protects formylmethionyl-tRNA from spontaneous hydrolysis and promotes its binding to the 30S ribosomal subunits. Also involved in the hydrolysis of GTP during the formation of the 70S ribosomal complex. The chain is Translation initiation factor IF-2, mitochondrial (MTIF2) from Bos taurus (Bovine).